The chain runs to 354 residues: UPF0421 protein BH2644 (354 aa).

The next 4 membrane-spanning stretches (helical) occupy residues alanine 22 to isoleucine 42, leucine 60 to phenylalanine 80, threonine 107 to alanine 127, and valine 133 to proline 153.

This sequence belongs to the UPF0421 family.

The protein localises to the cell membrane. This is UPF0421 protein BH2644 from Halalkalibacterium halodurans (strain ATCC BAA-125 / DSM 18197 / FERM 7344 / JCM 9153 / C-125) (Bacillus halodurans).